The sequence spans 382 residues: Beta-1,4-galactosyltransferase 6 (382 aa).

Over 1–15 (MSALKRMMRVSNRSL) the chain is Cytoplasmic. The helical; Signal-anchor for type II membrane protein transmembrane segment at 16–35 (IAFIFFFSLSTSCLYFIYVA) threads the bilayer. Over 36 to 382 (PGIANTYLFM…MPELAPIEDY (347 aa)) the chain is Lumenal. Residues Asn-71, Asn-75, Asn-83, Asn-84, Asn-99, and Asn-122 are each glycosylated (N-linked (GlcNAc...) asparagine). Cys-108 and Cys-152 are oxidised to a cystine. Residues 163 to 167 (PFRNR), 202 to 204 (FNR), 229 to 230 (VD), Tyr-258, and Trp-290 contribute to the UDP-alpha-D-galactose site. An intrachain disulfide couples Cys-223 to Cys-242. Asp-230 contributes to the Mn(2+) binding site. 292–295 (GEDD) lines the N-acetyl-D-glucosamine pocket. N-linked (GlcNAc...) asparagine glycosylation is present at Asn-307. Residue His-323 participates in Mn(2+) binding. 323–324 (HH) contacts UDP-alpha-D-galactose. Arg-334 lines the N-acetyl-D-glucosamine pocket. Asn-367 carries N-linked (GlcNAc...) asparagine glycosylation.

It belongs to the glycosyltransferase 7 family. Mn(2+) serves as cofactor. Mg(2+) is required as a cofactor. The cofactor is Ca(2+). In terms of tissue distribution, brain and kidney.

The protein resides in the golgi apparatus. It is found in the golgi stack membrane. The catalysed reaction is a beta-D-glucosyl-(1&lt;-&gt;1')-N-acylsphing-4-enine + UDP-alpha-D-galactose = a beta-D-Gal-(1-&gt;4)-beta-D-Glc-(1&lt;-&gt;1)-Cer(d18:1(4E)) + UDP + H(+). It functions in the pathway protein modification; protein glycosylation. The protein operates within sphingolipid metabolism. With respect to regulation, inhibited by EDTA. Its function is as follows. Catalyzes the synthesis of lactosylceramide (LacCer) via the transfer of galactose from UDP-galactose to glucosylceramide (GlcCer). LacCer is the starting point in the biosynthesis of all gangliosides (membrane-bound glycosphingolipids) which play pivotal roles in the CNS including neuronal maturation and axonal and myelin formation. The sequence is that of Beta-1,4-galactosyltransferase 6 from Mus musculus (Mouse).